We begin with the raw amino-acid sequence, 327 residues long: tRNA pseudouridine synthase B (327 aa).

The active-site Nucleophile is D69. Residues Y97, Y201, and L222 each contribute to the substrate site.

The protein belongs to the pseudouridine synthase TruB family. Type 1 subfamily.

The catalysed reaction is uridine(55) in tRNA = pseudouridine(55) in tRNA. Responsible for synthesis of pseudouridine from uracil-55 in the psi GC loop of transfer RNAs. The sequence is that of tRNA pseudouridine synthase B from Wigglesworthia glossinidia brevipalpis.